We begin with the raw amino-acid sequence, 131 residues long: D-ribose pyranase (131 aa).

The active-site Proton donor is the His20. Substrate is bound by residues Asp28, His98, and 120 to 122 (YAN).

The protein belongs to the RbsD / FucU family. RbsD subfamily. As to quaternary structure, homodecamer.

Its subcellular location is the cytoplasm. The enzyme catalyses beta-D-ribopyranose = beta-D-ribofuranose. It functions in the pathway carbohydrate metabolism; D-ribose degradation; D-ribose 5-phosphate from beta-D-ribopyranose: step 1/2. In terms of biological role, catalyzes the interconversion of beta-pyran and beta-furan forms of D-ribose. In Enterococcus faecalis (strain ATCC 700802 / V583), this protein is D-ribose pyranase.